A 222-amino-acid chain; its full sequence is 7-cyano-7-deazaguanine synthase (222 aa).

Leu-8–Leu-18 is a binding site for ATP. Zn(2+) contacts are provided by Cys-187, Cys-197, Cys-200, and Cys-203.

This sequence belongs to the QueC family. Zn(2+) serves as cofactor.

It carries out the reaction 7-carboxy-7-deazaguanine + NH4(+) + ATP = 7-cyano-7-deazaguanine + ADP + phosphate + H2O + H(+). Its pathway is purine metabolism; 7-cyano-7-deazaguanine biosynthesis. In terms of biological role, catalyzes the ATP-dependent conversion of 7-carboxy-7-deazaguanine (CDG) to 7-cyano-7-deazaguanine (preQ(0)). This is 7-cyano-7-deazaguanine synthase from Alcanivorax borkumensis (strain ATCC 700651 / DSM 11573 / NCIMB 13689 / SK2).